Consider the following 318-residue polypeptide: NADH-ubiquinone oxidoreductase chain 1 (318 aa).

8 helical membrane-spanning segments follow: residues 2 to 22, 69 to 89, 102 to 122, 146 to 166, 171 to 191, 222 to 242, 253 to 273, and 294 to 314; these read FLINTLLLILPVLLAMAFLTL, LLFIIAPTLALTLALSMWLPI, ILFILATSSLAVYSILWSGWA, LAIILLCILLMNGSFTLSSLI, YMWILLPAWPLAMMWFISTLA, LFFLAEYTNIILMNALTAILF, EMFTVNFATKTLLLTMTFLWI, and LPLTLALCMWHISMPIMLSSI.

The protein belongs to the complex I subunit 1 family. Core subunit of respiratory chain NADH dehydrogenase (Complex I) which is composed of 45 different subunits.

Its subcellular location is the mitochondrion inner membrane. The catalysed reaction is a ubiquinone + NADH + 5 H(+)(in) = a ubiquinol + NAD(+) + 4 H(+)(out). Its function is as follows. Core subunit of the mitochondrial membrane respiratory chain NADH dehydrogenase (Complex I) which catalyzes electron transfer from NADH through the respiratory chain, using ubiquinone as an electron acceptor. Essential for the catalytic activity and assembly of complex I. The chain is NADH-ubiquinone oxidoreductase chain 1 (MT-ND1) from Oryctolagus cuniculus (Rabbit).